A 33-amino-acid polypeptide reads, in one-letter code: uncharacterized protein (33 aa).

Residues 1-33 are disordered; that stretch reads MQPGTGLSFDISQILKQGSDPKQKLPERQAIVL.

This is an uncharacterized protein from Caenorhabditis elegans.